Reading from the N-terminus, the 35-residue chain is Putative gastric cancer-related gene 224 protein (35 aa).

Expressed in gastric mucosa.

This Homo sapiens (Human) protein is Putative gastric cancer-related gene 224 protein (GCRG224).